A 432-amino-acid polypeptide reads, in one-letter code: Homogentisate 1,2-dioxygenase (432 aa).

The Proton acceptor role is filled by histidine 286. Histidine 329 and glutamate 335 together coordinate Fe cation. Homogentisate is bound by residues tyrosine 344 and histidine 365. Histidine 365 provides a ligand contact to Fe cation.

Belongs to the homogentisate dioxygenase family. As to quaternary structure, hexamer; dimer of trimers. The cofactor is Fe cation.

The catalysed reaction is homogentisate + O2 = 4-maleylacetoacetate + H(+). Its pathway is amino-acid degradation; L-phenylalanine degradation; acetoacetate and fumarate from L-phenylalanine: step 4/6. Its function is as follows. Involved in the catabolism of homogentisate (2,5-dihydroxyphenylacetate or 2,5-OH-PhAc), a central intermediate in the degradation of phenylalanine and tyrosine. Catalyzes the oxidative ring cleavage of the aromatic ring of homogentisate to yield maleylacetoacetate. This Bordetella pertussis (strain Tohama I / ATCC BAA-589 / NCTC 13251) protein is Homogentisate 1,2-dioxygenase.